The sequence spans 501 residues: Zinc finger protein 704 (501 aa).

Residues 80–96 (SLKSTCNGGQRDGLTQG) show a composition bias toward polar residues. 3 disordered regions span residues 80-138 (SLKS…HTRS), 183-203 (PLVRSPPVKVSEGLNGSWKDG), and 216-267 (WSWS…LFDE). Over residues 115 to 137 (EEPRVLEHKRTGRALETEKDHTR) the composition is skewed to basic and acidic residues. The C2H2-type zinc-finger motif lies at 281–306 (FKCLWKNCGKVLSTAAGIQRHIRTVH). Disordered regions lie at residues 340 to 380 (SLSP…SRSA), 398 to 419 (PVTIPSTSSTGFTPSSSSFSIS), 427 to 446 (FTGTSASPTHSRTQGFGEQH), and 453 to 472 (LSSPPRAAGSLSRKSRGEGK). Residues 368-380 (SESSSSTPLSRSA) show a composition bias toward low complexity. The CR1 signature appears at 472–476 (KKCRK). The CR2 signature appears at 490–494 (CRWKK).

It localises to the nucleus. Its function is as follows. Transcription factor. The polypeptide is Zinc finger protein 704 (znf704) (Danio rerio (Zebrafish)).